Here is a 2000-residue protein sequence, read N- to C-terminus: E3 ubiquitin-protein ligase TTC3 (2000 aa).

The interaction with POLG stretch occupies residues 20–249 (MDDFAEGGLS…RHSCMQCVKQ (230 aa)). 2 TPR repeats span residues 250–283 (GELMKMRGNEEFAKEKFEIAVIYYTRAIEYRPEN) and 284–317 (HLLYGNRALCFLRMGQFRNALSDGKRAIVLKNTW). S397 is subject to Phosphoserine. A disordered region spans residues 442 to 478 (CDCHPEFLPPPSQPPRHKGKQKSRNNESEKPSSNSQV). 2 TPR repeats span residues 556–592 (VLVVYGLAVSLLGIGRPEELSEAENQFKRIIEHYPNE) and 596–629 (CLAYCGIGKVYLKKNRFLEALNHFEKAKTLICRL). Residues 804–828 (AQERMEEDLRESNPPKPEEPEETVE) form a disordered region. The residue at position 1029 (S1029) is a Phosphoserine. Disordered regions lie at residues 1041 to 1087 (NKGK…GPFA), 1233 to 1308 (FQPD…PEDA), 1423 to 1448 (QSSTADARTALSEPEGNSRHSGSSDS), 1806 to 1839 (LEVKKASQVSPSEQNPEADEKPSGQATRSSQSQK), and 1894 to 1947 (EEQK…VPAP). The span at 1059–1070 (GTASVTPSSETV) shows a compositional bias: polar residues. Position 1080 is a phosphoserine (S1080). Positions 1268–1277 (DSDSSSGSAS) are enriched in low complexity. The segment covering 1829-1839 (GQATRSSQSQK) has biased composition (polar residues). Residues 1894–1911 (EEQKKKKPNPGKDKKTSE) show a composition bias toward basic and acidic residues. Positions 1912–1934 (AHPAASVSKSSPSPPLAAAGPSA) are enriched in low complexity. The RING-type; atypical zinc-finger motif lies at 1952–1991 (CQICHEIFKSKNMRVLKCGHKFHKGCFKQWLKGQSTCPTC).

In terms of assembly, interacts (when phosphorylated on Ser-397) with AKT1, AKT2 and AKT3 (when phosphorylated). Interacts with CIT. Interacts with POLG. Interacts with HSP70. Interacts with SMURF2. Post-translationally, phosphorylation on Ser-397 by Akt is required for ubiquitin ligase activity. Proteolytically cleaved into differently sized N- and C-terminal fragments.

The protein localises to the nucleus. The protein resides in the cytoplasm. It is found in the golgi apparatus. It catalyses the reaction S-ubiquitinyl-[E2 ubiquitin-conjugating enzyme]-L-cysteine + [acceptor protein]-L-lysine = [E2 ubiquitin-conjugating enzyme]-L-cysteine + N(6)-ubiquitinyl-[acceptor protein]-L-lysine.. It functions in the pathway protein modification; protein ubiquitination. E3 ubiquitin-protein ligase which catalyzes the formation of 'Lys-48'-polyubiquitin chains. Mediates the ubiquitination and subsequent degradation of phosphorylated Akt (AKT1, AKT2 and AKT3) in the nucleus. Acts as a terminal regulator of Akt signaling after activation; its phosphorylation by Akt, which is a prerequisite for ubiquitin ligase activity, suggests the existence of a regulation mechanism required to control Akt levels after activation. Positively regulates TGFB1-induced epithelial-mesenchymal transition and myofibroblast differentiation by mediating the ubiquitination and subsequent degradation of SMURF2. Regulates neuronal differentiation by regulating actin remodeling and Golgi organization via a signaling cascade involving RHOA, CIT and ROCK. Inhibits cell proliferation. The polypeptide is E3 ubiquitin-protein ligase TTC3 (Rattus norvegicus (Rat)).